Consider the following 218-residue polypeptide: Probable nicotinate-nucleotide adenylyltransferase (218 aa).

This sequence belongs to the NadD family.

The enzyme catalyses nicotinate beta-D-ribonucleotide + ATP + H(+) = deamido-NAD(+) + diphosphate. The protein operates within cofactor biosynthesis; NAD(+) biosynthesis; deamido-NAD(+) from nicotinate D-ribonucleotide: step 1/1. In terms of biological role, catalyzes the reversible adenylation of nicotinate mononucleotide (NaMN) to nicotinic acid adenine dinucleotide (NaAD). The sequence is that of Probable nicotinate-nucleotide adenylyltransferase from Halorhodospira halophila (strain DSM 244 / SL1) (Ectothiorhodospira halophila (strain DSM 244 / SL1)).